The chain runs to 370 residues: Gibberellin 3-beta-dioxygenase 2-2 (370 aa).

The Fe2OG dioxygenase domain maps to 205–306; the sequence is MTATMHLNWY…RISLGYFLGP (102 aa). Fe cation is bound by residues H229, D231, and H287. The active site involves R297.

It belongs to the iron/ascorbate-dependent oxidoreductase family. GA3OX subfamily. L-ascorbate serves as cofactor. It depends on Fe cation as a cofactor.

The catalysed reaction is gibberellin A20 + 2-oxoglutarate + O2 = gibberellin A1 + succinate + CO2. In terms of biological role, converts the inactive gibberellin precursors GA9 and GA20 in the bioactives gibberellins GA4 and GA1. This Triticum aestivum (Wheat) protein is Gibberellin 3-beta-dioxygenase 2-2 (GA3ox2-2).